The sequence spans 267 residues: Proteasome subunit alpha (267 aa).

The segment at 231-267 is disordered; the sequence is ETLLQERDSKESAESEEPKESEEGKKTGKKSDADSSD. Residues 234–267 are compositionally biased toward basic and acidic residues; it reads LQERDSKESAESEEPKESEEGKKTGKKSDADSSD.

It belongs to the peptidase T1A family. The 20S proteasome core is composed of 14 alpha and 14 beta subunits that assemble into four stacked heptameric rings, resulting in a barrel-shaped structure. The two inner rings, each composed of seven catalytic beta subunits, are sandwiched by two outer rings, each composed of seven alpha subunits. The catalytic chamber with the active sites is on the inside of the barrel. Has a gated structure, the ends of the cylinder being occluded by the N-termini of the alpha-subunits. Is capped by the proteasome-associated ATPase, ARC.

The protein resides in the cytoplasm. It functions in the pathway protein degradation; proteasomal Pup-dependent pathway. With respect to regulation, the formation of the proteasomal ATPase ARC-20S proteasome complex, likely via the docking of the C-termini of ARC into the intersubunit pockets in the alpha-rings, may trigger opening of the gate for substrate entry. Interconversion between the open-gate and close-gate conformations leads to a dynamic regulation of the 20S proteasome proteolysis activity. Component of the proteasome core, a large protease complex with broad specificity involved in protein degradation. This is Proteasome subunit alpha from Mycobacterium marinum (strain ATCC BAA-535 / M).